A 492-amino-acid polypeptide reads, in one-letter code: Coagulation factor X (492 aa).

Residues 1–23 form the signal peptide; it reads MAGLLHLVLLSTALGGLLRPAGS. A propeptide spanning residues 24–40 is cleaved from the precursor; the sequence is VFLPRDQAHRVLQRARR. Positions 41–85 constitute a Gla domain; that stretch reads ANSFLEEVKQGNLERECLEEACSLEEAREVFEDAEQTDEFWSKYK. 4-carboxyglutamate is present on residues E46, E47, E54, E56, E59, E60, E65, E66, E69, E72, E75, and E79. C57 and C62 are oxidised to a cystine. Residues 86–122 enclose the EGF-like 1; calcium-binding domain; sequence DGDQCEGHPCLNQGHCKDGIGDYTCTCAEGFEGKNCE. 11 disulfide bridges follow: C90–C101, C95–C110, C112–C121, C129–C140, C136–C149, C151–C164, C172–C341, C240–C245, C260–C276, C389–C403, and C414–C442. Position 103 is a (3R)-3-hydroxyaspartate (D103). The region spanning 125–165 is the EGF-like 2 domain; it reads TREICSLDNGGCDQFCREERSEVRCSCAHGYVLGDDSKSCV. Positions 183-233 are cleaved as a propeptide — activation peptide; sequence WAIHTSEDALDASELEHYDPADLSPTESSLDLLGLNRTEPSAGEDGSQVVR. Sulfotyrosine is present on Y200. O-linked (GalNAc...) threonine glycosylation occurs at T208. N218 carries an N-linked (GlcNAc...) asparagine glycan. Residues 234–466 enclose the Peptidase S1 domain; it reads IVGGRDCAEG…FLKWIDKIMK (233 aa). Residues H275 and D321 each act as charge relay system in the active site. S418 serves as the catalytic Charge relay system. Positions 472-492 are disordered; sequence AGSRGHSEAPATWTVPPPLPL. The propeptide at 476 to 492 is may be removed but is not necessary for activation; it reads GHSEAPATWTVPPPLPL. A glycan (O-linked (GalNAc...) threonine) is linked at T485.

It belongs to the peptidase S1 family. The two chains are formed from a single-chain precursor by the excision of two Arg residues and are held together by 1 or more disulfide bonds. Forms a heterodimer with SERPINA5. Interacts (activated) with guianensin, an anticoagulant protein from Simulium guianense saliva. Interacts (activated) with simukunin, an anticoagulant protein from Simulium vittatum saliva. The vitamin K-dependent, enzymatic carboxylation of some glutamate residues allows the modified protein to bind calcium. Post-translationally, N- and O-glycosylated. In terms of processing, proteolytically cleaved and activated by cathepsin CTSG. The activation peptide is cleaved by factor IXa (in the intrinsic pathway), or by factor VIIa (in the extrinsic pathway). The iron and 2-oxoglutarate dependent 3-hydroxylation of aspartate and asparagine is (R) stereospecific within EGF domains.

Its subcellular location is the secreted. The catalysed reaction is Selective cleavage of Arg-|-Thr and then Arg-|-Ile bonds in prothrombin to form thrombin.. With respect to regulation, inhibited by SERPINA5. Its function is as follows. Factor Xa is a vitamin K-dependent glycoprotein that converts prothrombin to thrombin in the presence of factor Va, calcium and phospholipid during blood clotting. Factor Xa activates pro-inflammatory and pro-fibrotic signaling pathways in a protease-activated receptor (PAR)-dependent manner. The sequence is that of Coagulation factor X (F10) from Bos taurus (Bovine).